A 509-amino-acid polypeptide reads, in one-letter code: uncharacterized protein (509 aa).

Disordered regions lie at residues 112-131, 152-325, 365-457, and 488-509; these read KSKQNNNGFNGHKGNFSENE, NKNT…NNDS, NNIN…PNQG, and AQQPVSQQNNNVETNQDNVQQQ. Composition is skewed to low complexity over residues 116-127 and 153-184; these read NNNGFNGHKGNF and KNTIITRKNNNNNNSNNNNNNNNNYNQKSNTT. The segment covering 189–217 has biased composition (acidic residues); the sequence is YSDDDYQNEQNEFEEEDYDSNDDENDSHD. A compositionally biased stretch (polar residues) spans 228–242; sequence KTTNQLKRKVSSSFT. Low complexity-rich tracts occupy residues 243–325 and 365–397; these read NNNY…NNDS and NNINANNNNNNNNNNNNNNNLNDSTPNNQTNND. Residues 398-422 are compositionally biased toward polar residues; it reads LKSSNHSNYDFNYNTNERLSHSPIQ. Residues 423-442 are compositionally biased toward low complexity; that stretch reads THSSSNNSTPSNQSPTFPSN. Composition is skewed to polar residues over residues 443 to 457 and 496 to 509; these read YISQNANINYNPNQG and NNNVETNQDNVQQQ.

This is an uncharacterized protein from Dictyostelium discoideum (Social amoeba).